We begin with the raw amino-acid sequence, 303 residues long: Crk-like protein (303 aa).

In terms of domain architecture, SH2 spans tryptophan 14–alanine 102. Residues aspartate 123 to arginine 183 form the SH3 1 domain. Phosphotyrosine is present on residues tyrosine 127 and tyrosine 207. A disordered region spans residues serine 184 to glutamine 234. Residues asparagine 235–proline 296 form the SH3 2 domain.

This sequence belongs to the CRK family. In terms of assembly, interacts with tyrosine-phosphorylated EPOR and INPP5D/SHIP1. Interacts with DOCK2 and DOCK5 via its first SH3 domain. Interacts with phosphorylated CBLB and IRS4. Interacts with BCAR1/CAS and NEDD9/HEF1.

May mediate the transduction of intracellular signals. This chain is Crk-like protein (CRKL), found in Homo sapiens (Human).